A 154-amino-acid polypeptide reads, in one-letter code: Style cell-cycle inhibitor 1-A (154 aa).

Composition is skewed to basic and acidic residues over residues 1–11 (MGSDKKTPEEK) and 24–48 (DEVKSKRQNIKGDEERRKEKKDKSK). The disordered stretch occupies residues 1-84 (MGSDKKTPEE…DKSKNKFEEL (84 aa)). Residues 63-77 (GEKHKTKSHKHKDKS) are compositionally biased toward basic residues.

In terms of tissue distribution, specifically expressed in flowers pistils, especially in stigmas and styles. Barely detected in roots, stems, leaves, sepals, petals and stamen.

Its subcellular location is the nucleus. Component of the auxin signaling transduction pathway that regulates cell proliferation and differentiation during flowers stigmas and styles development. Involved in the regulation of auxin-related genes. This is Style cell-cycle inhibitor 1-A from Nicotiana tabacum (Common tobacco).